The sequence spans 578 residues: E3 ubiquitin-protein ligase Praja-1 (578 aa).

A disordered region spans residues 1–298 (MSHQERIASQ…KVPRRRRTMA (298 aa)). Composition is skewed to basic and acidic residues over residues 57-67 (DYSRYPPREYR) and 107-116 (KFKDDPEKGA). Over residues 151–163 (SKQNGSSASQISS) the composition is skewed to polar residues. T231 carries the phosphothreonine modification. Composition is skewed to basic and acidic residues over residues 243–264 (RWRD…RGRG) and 273–290 (RYAE…ADKV). A phosphoserine mark is found at S317 and S319. The tract at residues 332-397 (RSREQPQSSS…QASLEEGEIP (66 aa)) is disordered. Residues 359-373 (AGAGSLASAGSNGSG) are compositionally biased toward low complexity. Residues 377-395 (EVQDPSLQEEEQASLEEGE) are compositionally biased toward acidic residues. The RING-type zinc-finger motif lies at 530–571 (CPICCSEYVKGEVATELPCHHYFHKPCVSIWLQKSGTCPVCR).

As to quaternary structure, binds ubiquitin-conjugating enzymes (E2s). Binds, in vitro and in vivo, the MAGE conserved domain of MAGED1. Binds weakly Necdin, in vitro. Interacts with UBE2D2. Post-translationally, substrate for E2-dependent ubiquitination. As to expression, expressed in brain, liver, kidney. Highest levels in brain where it is found in many regions including cortical and subcortical areas and in neurons of the amygdala. Weak expression also found in testis. Also expressed in developing embryo.

It catalyses the reaction S-ubiquitinyl-[E2 ubiquitin-conjugating enzyme]-L-cysteine + [acceptor protein]-L-lysine = [E2 ubiquitin-conjugating enzyme]-L-cysteine + N(6)-ubiquitinyl-[acceptor protein]-L-lysine.. Has E2-dependent E3 ubiquitin-protein ligase activity. Ubiquitinates MAGED1 antigen leading to its subsequent degradation by proteasome. May be involved in protein sorting. In Mus musculus (Mouse), this protein is E3 ubiquitin-protein ligase Praja-1 (Pja1).